The primary structure comprises 749 residues: Cytosolic phospholipase A2 (749 aa).

A phospholipid binding region spans residues 1–178 (MSFIDPYQHI…MKKLLGPKNS (178 aa)). The residue at position 2 (serine 2) is a Phosphoserine. The region spanning 6–122 (PYQHIIVEHQ…KVGEKKEVPF (117 aa)) is the C2 domain. Aspartate 40, threonine 41, aspartate 43, asparagine 65, aspartate 93, alanine 94, and asparagine 95 together coordinate Ca(2+). The 601-residue stretch at 140 to 740 (SCPDLRFSMA…SNVEARRFFN (601 aa)) folds into the PLA2c domain. Catalysis depends on serine 228, which acts as the Nucleophile. Threonine 268 is modified (phosphothreonine). The interval 409–457 (GSQSRGSTMEEELENITTKHIVSNDSSDSDDESHEPKGTENEDAGSDYQ) is disordered. Residues serine 434, serine 435, and serine 437 each carry the phosphoserine modification. Serine 505 is modified (phosphoserine; by MAPK). Residue serine 515 is modified to Phosphoserine. Lysine 541 is covalently cross-linked (Glycyl lysine isopeptide (Lys-Gly) (interchain with G-Cter in SUMO2)). The Proton acceptor role is filled by aspartate 549. Residue lysine 606 forms a Glycyl lysine isopeptide (Lys-Gly) (interchain with G-Cter in SUMO2) linkage. Phosphoserine is present on residues serine 727 and serine 729.

Interacts with KAT5. Post-translationally, phosphorylated at both Ser-505 and Ser-727 in response to mitogenic stimuli. As to expression, expressed in various cells and tissues such as macrophages, neutrophils, fibroblasts and lung endothelium. Expressed in platelets (at protein level).

It localises to the cytoplasm. It is found in the golgi apparatus membrane. The protein localises to the nucleus envelope. It carries out the reaction a 1,2-diacyl-sn-glycero-3-phosphocholine + H2O = a 1-acyl-sn-glycero-3-phosphocholine + a fatty acid + H(+). It catalyses the reaction a 1-O-alkyl-2-acyl-sn-glycero-3-phosphocholine + H2O = a 1-O-alkyl-sn-glycero-3-phosphocholine + a fatty acid + H(+). The catalysed reaction is a 1-acyl-sn-glycero-3-phosphocholine + H2O = sn-glycerol 3-phosphocholine + a fatty acid + H(+). The enzyme catalyses 1-hexadecanoyl-2-(5Z,8Z,11Z,14Z-eicosatetraenoyl)-sn-glycero-3-phosphocholine + H2O = 1-hexadecanoyl-sn-glycero-3-phosphocholine + (5Z,8Z,11Z,14Z)-eicosatetraenoate + H(+). It carries out the reaction 1,2-di-(5Z,8Z,11Z,14Z-eicosatetraenoyl)-sn-glycero-3-phosphocholine + H2O = 1-(5Z,8Z,11Z,14Z-eicosatetraenoyl)-sn-glycero-3-phosphocholine + (5Z,8Z,11Z,14Z)-eicosatetraenoate + H(+). It catalyses the reaction 1-octadecanoyl-2-(5Z,8Z,11Z,14Z-eicosatetraenoyl)-sn-glycero-3-phosphocholine + H2O = 1-octadecanoyl-sn-glycero-3-phosphocholine + (5Z,8Z,11Z,14Z)-eicosatetraenoate + H(+). The catalysed reaction is 1-hexadecanoyl-2-(9Z,12Z-octadecadienoyl)-sn-glycero-3-phosphocholine + H2O = (9Z,12Z)-octadecadienoate + 1-hexadecanoyl-sn-glycero-3-phosphocholine + H(+). The enzyme catalyses 1-octadecanoyl-2-(9Z,12Z,15Z-octadecatrienoyl)-sn-glycero-3-phosphocholine + H2O = (9Z,12Z,15Z)-octadecatrienoate + 1-octadecanoyl-sn-glycero-3-phosphocholine + H(+). It carries out the reaction 1-(5Z,8Z,11Z,14Z-eicosatetraenoyl)-2-hexadecanoyl-sn-glycero-3-phosphocholine + H2O = 1-(5Z,8Z,11Z,14Z-eicosatetraenoyl)-sn-glycero-3-phosphocholine + hexadecanoate + H(+). It catalyses the reaction 1-O-hexadecyl-2-(5Z,8Z,11Z,14Z)-eicosatetraenoyl-sn-glycero-3-phosphocholine + H2O = 1-O-hexadecyl-sn-glycero-3-phosphocholine + (5Z,8Z,11Z,14Z)-eicosatetraenoate + H(+). The catalysed reaction is 1,2-di-(9Z-octadecenoyl)-sn-glycero-3-phospho-(1'-sn-glycerol) + H2O = 1-(9Z-octadecenoyl)-sn-glycero-3-phospho-(1'-sn-glycerol) + (9Z)-octadecenoate + H(+). The enzyme catalyses 1-octadecanoyl-2-(5Z,8Z,11Z,14Z-eicosatetraenoyl)-sn-glycero-3-phosphate + H2O = 1-octadecanoyl-sn-glycero-3-phosphate + (5Z,8Z,11Z,14Z)-eicosatetraenoate + H(+). It carries out the reaction 1-hexadecanoyl-sn-glycero-3-phosphocholine + H2O = sn-glycerol 3-phosphocholine + hexadecanoate + H(+). It catalyses the reaction 2-(prostaglandin E2)-sn-glycero-3-phosphoethanolamine + H2O = sn-glycero-3-phosphoethanolamine + prostaglandin E2 + H(+). The catalysed reaction is 2-[(15S)-hydroxy-(5Z,8Z,11Z,13E)-eicosatetraenoyl]-sn-glycero-3-phosphocholine + H2O = (15S)-hydroxy-(5Z,8Z,11Z,13E)-eicosatetraenoate + sn-glycerol 3-phosphocholine + H(+). The enzyme catalyses 2-[(15R)-hydroxy-(5Z,8Z,11Z,13E)-eicosatetraenoyl]-sn-glycero-3-phosphocholine + H2O = (15R)-hydroxy-(5Z,8Z,11Z,13E)-eicosatetraenoate + sn-glycerol 3-phosphocholine + H(+). It carries out the reaction 2-(prostaglandin E2)-sn-glycero-3-phosphocholine + H2O = prostaglandin E2 + sn-glycerol 3-phosphocholine + H(+). It catalyses the reaction 2-[(11R)-hydroxy-(5Z,8Z,12E,14Z)-eicosatetraenoyl]-sn-glycero-3-phosphocholine + H2O = (11R)-hydroxy-(5Z,8Z,12E,14Z)-eicosatetraenoate + sn-glycerol 3-phosphocholine + H(+). The catalysed reaction is 1-(5Z,8Z,11Z,14Z-eicosatetraenoyl)-2-O-hexadecyl-sn-glycero-3-phosphocholine + H2O = 2-O-hexadecyl-sn-glycero-3-phosphocholine + (5Z,8Z,11Z,14Z)-eicosatetraenoate + H(+). The enzyme catalyses 1-octadecanoyl-2-(5Z,8Z,11Z,14Z-eicosatetraenoyl)-sn-glycero-3-phosphocholine + glycerol = 1-(5Z,8Z,11Z,14Z-eicosatetraenoyl)-glycerol + 1-octadecanoyl-sn-glycero-3-phosphocholine. It carries out the reaction 1-octadecanoyl-2-(9Z,12Z,15Z-octadecatrienoyl)-sn-glycero-3-phosphocholine + glycerol = 1-(9Z,12Z,15Z-octadecatrienoyl)-glycerol + 1-octadecanoyl-sn-glycero-3-phosphocholine. Its pathway is membrane lipid metabolism; glycerophospholipid metabolism. It functions in the pathway lipid metabolism; arachidonate metabolism. The protein operates within lipid metabolism; prostaglandin biosynthesis. It participates in lipid metabolism; leukotriene B4 biosynthesis. Its activity is regulated as follows. Activated by cytosolic calcium, which is necessary for binding to membrane lipids. Activated by phosphorylation in response to mitogenic stimuli. Activated by ceramide-1-phosphate. Binding (via C2 domain) to ceramide-1-phosphate increases the affinity for membrane lipids. Can be activated by phosphoinositides in the absence of calcium. Inhibited by ANXA5 in a calcium- and substrate-dependent way. Has primarily calcium-dependent phospholipase and lysophospholipase activities, with a major role in membrane lipid remodeling and biosynthesis of lipid mediators of the inflammatory response. Plays an important role in embryo implantation and parturition through its ability to trigger prostanoid production. Preferentially hydrolyzes the ester bond of the fatty acyl group attached at sn-2 position of phospholipids (phospholipase A2 activity). Selectively hydrolyzes sn-2 arachidonoyl group from membrane phospholipids, providing the precursor for eicosanoid biosynthesis via the cyclooxygenase pathway. In an alternative pathway of eicosanoid biosynthesis, hydrolyzes sn-2 fatty acyl chain of eicosanoid lysophopholipids to release free bioactive eicosanoids. Hydrolyzes the ester bond of the fatty acyl group attached at sn-1 position of phospholipids (phospholipase A1 activity) only if an ether linkage rather than an ester linkage is present at the sn-2 position. This hydrolysis is not stereospecific. Has calcium-independent phospholipase A2 and lysophospholipase activities in the presence of phosphoinositides. Has O-acyltransferase activity. Catalyzes the transfer of fatty acyl chains from phospholipids to a primary hydroxyl group of glycerol (sn-1 or sn-3), potentially contributing to monoacylglycerol synthesis. The polypeptide is Cytosolic phospholipase A2 (PLA2G4A) (Homo sapiens (Human)).